The chain runs to 122 residues: UPF0102 protein Ping_1176 (122 aa).

This sequence belongs to the UPF0102 family.

This chain is UPF0102 protein Ping_1176, found in Psychromonas ingrahamii (strain DSM 17664 / CCUG 51855 / 37).